Reading from the N-terminus, the 159-residue chain is Phosphopantetheine adenylyltransferase (159 aa).

Residue Ser9 participates in substrate binding. Residues 9–10 (SF) and His17 each bind ATP. 3 residues coordinate substrate: Lys41, Leu73, and Arg87. Residues 88-90 (GLR), Glu98, and 123-129 (YSYVSSS) each bind ATP.

The protein belongs to the bacterial CoaD family. Homohexamer. It depends on Mg(2+) as a cofactor.

The protein resides in the cytoplasm. The enzyme catalyses (R)-4'-phosphopantetheine + ATP + H(+) = 3'-dephospho-CoA + diphosphate. It functions in the pathway cofactor biosynthesis; coenzyme A biosynthesis; CoA from (R)-pantothenate: step 4/5. Its function is as follows. Reversibly transfers an adenylyl group from ATP to 4'-phosphopantetheine, yielding dephospho-CoA (dPCoA) and pyrophosphate. This chain is Phosphopantetheine adenylyltransferase, found in Shouchella clausii (strain KSM-K16) (Alkalihalobacillus clausii).